We begin with the raw amino-acid sequence, 259 residues long: AM-toxin biosynthesis protein 11 (259 aa).

The segment at 39–66 (RRSRRRPEEESIQSLSKHVSTTTQPCPT) is disordered. Residues 50-64 (IQSLSKHVSTTTQPC) show a composition bias toward polar residues.

It functions in the pathway mycotoxin biosynthesis. Its function is as follows. Part of the gene clusters that mediate the biosynthesis of AM-toxins, host-selective toxins (HSTs) causing Alternaria blotch on apple, a worldwide distributed disease. AM-toxins are cyclic depsipeptides containing the 3 residues 2-hydroxy-isovaleric acid (2-HIV), dehydroalanine, L-alanine which are common for all 3 AM-toxins I to III. The fourth precursor is L-alpha-amino-methoxyphenyl-valeric acid (L-Amv) for AM-toxin I, L-alpha-amino-phenyl-valeric acid (L-Apv) for AM-toxin II, and L-alpha-amino-hydroxyphenyl-valeric acid (L-Ahv) for AM-toxin III. AM-toxins have two target sites for affecting susceptible apple cells; they cause invagination of the plasma membrane and electrolyte loss and chloroplast disorganization. The non-ribosomal peptide synthetase AMT1 contains 4 catalytic modules and is responsible for activation of each residue in AM-toxin. The aldo-keto reductase AMT2 catalyzes the conversion of 2-keto-isovaleric acid (2-KIV) to 2-hydroxy-isovaleric acid (2-HIV), one of the precursor residues incorporated by AMT1 during AM-toxin biosynthesis, by reduction of its ketone to an alcohol. The cytochrome P450 monooxygenase AMT3 and the thioesterase AMT4 are also important for AM-toxin production, but their exact function within the AM-toxin biosynthesis are not known yet. Up to 21 proteins (including AMT1 to AMT4) are predicted to be involved in AM-toxin biosynthesis since their expression ishighly up-regulated in AM-toxin-producing cultures. The sequence is that of AM-toxin biosynthesis protein 11 from Alternaria alternata (Alternaria rot fungus).